A 269-amino-acid polypeptide reads, in one-letter code: Shikimate dehydrogenase (NADP(+)) (269 aa).

Shikimate contacts are provided by residues 19–21 and Thr-66; that span reads SLS. The active-site Proton acceptor is Lys-70. Asp-82 provides a ligand contact to NADP(+). Shikimate contacts are provided by Asn-91 and Asp-106. NADP(+) is bound by residues 130–134, 153–158, and Ile-214; these read GAGGA and NRTKEK. Tyr-216 is a shikimate binding site. Gly-235 is a binding site for NADP(+). Gln-242 is a binding site for shikimate.

Belongs to the shikimate dehydrogenase family. Homodimer.

It catalyses the reaction shikimate + NADP(+) = 3-dehydroshikimate + NADPH + H(+). The protein operates within metabolic intermediate biosynthesis; chorismate biosynthesis; chorismate from D-erythrose 4-phosphate and phosphoenolpyruvate: step 4/7. Its function is as follows. Involved in the biosynthesis of the chorismate, which leads to the biosynthesis of aromatic amino acids. Catalyzes the reversible NADPH linked reduction of 3-dehydroshikimate (DHSA) to yield shikimate (SA). The chain is Shikimate dehydrogenase (NADP(+)) from Aquifex aeolicus (strain VF5).